The primary structure comprises 127 residues: Large ribosomal subunit protein bL17 (127 aa).

Belongs to the bacterial ribosomal protein bL17 family. In terms of assembly, part of the 50S ribosomal subunit. Contacts protein L32.

The sequence is that of Large ribosomal subunit protein bL17 from Chromohalobacter salexigens (strain ATCC BAA-138 / DSM 3043 / CIP 106854 / NCIMB 13768 / 1H11).